We begin with the raw amino-acid sequence, 569 residues long: Proline--tRNA ligase (569 aa).

Belongs to the class-II aminoacyl-tRNA synthetase family. ProS type 1 subfamily. Homodimer.

It is found in the cytoplasm. It carries out the reaction tRNA(Pro) + L-proline + ATP = L-prolyl-tRNA(Pro) + AMP + diphosphate. Functionally, catalyzes the attachment of proline to tRNA(Pro) in a two-step reaction: proline is first activated by ATP to form Pro-AMP and then transferred to the acceptor end of tRNA(Pro). As ProRS can inadvertently accommodate and process non-cognate amino acids such as alanine and cysteine, to avoid such errors it has two additional distinct editing activities against alanine. One activity is designated as 'pretransfer' editing and involves the tRNA(Pro)-independent hydrolysis of activated Ala-AMP. The other activity is designated 'posttransfer' editing and involves deacylation of mischarged Ala-tRNA(Pro). The misacylated Cys-tRNA(Pro) is not edited by ProRS. This Latilactobacillus sakei subsp. sakei (strain 23K) (Lactobacillus sakei subsp. sakei) protein is Proline--tRNA ligase.